A 329-amino-acid chain; its full sequence is Protein SPATA31F3 (329 aa).

A helical membrane pass occupies residues 11 to 31 (VGYSVYTYGSIFIIALIIWQV). Positions 58–85 (SDRATRAKRTSKEEAEKLQKLLDTMKSQ) form a coiled coil. 3 disordered regions span residues 149-184 (ADRS…RSAT), 201-250 (QQLD…AAPT), and 288-329 (KPMT…KRNI). Residues Ser152 and Ser153 each carry the phosphoserine modification. Composition is skewed to polar residues over residues 154–184 (ELTY…RSAT) and 201–223 (QQLD…SSTD). Over residues 232-242 (QKKRKKTKKLA) the composition is skewed to basic residues. Basic and acidic residues predominate over residues 293-320 (EPEKTHSPVRDQAEGAEKKKKPECDLKA).

It belongs to the SPATA31 family.

It localises to the membrane. This chain is Protein SPATA31F3, found in Rattus norvegicus (Rat).